The sequence spans 403 residues: Putative gustatory receptor 98b (403 aa).

Topologically, residues 1-11 (MVAQKSRLLAR) are cytoplasmic. A helical membrane pass occupies residues 12 to 32 (AFPYLDIFSVFALTPPPQSFG). Topologically, residues 33-48 (HTPHRRLRWYLMTGYV) are extracellular. A helical transmembrane segment spans residues 49–69 (FYATAILATVFIVSYFNIIAI). Over 70–83 (DEEVLEYNVSDFTR) the chain is Cytoplasmic. The chain crosses the membrane as a helical span at residues 84 to 104 (VMGNIQKSLYSIMAIANHLNM). Topologically, residues 105 to 144 (LINYRRLGGIYKDIADLEMDMDEASQCFGGQRQRFSFRFR) are extracellular. The helical transmembrane segment at 145 to 165 (MALCVGVWMILMVGSMPRLTM) threads the bilayer. At 166-191 (TAMGPFVSTLLKILTEFVMIMQQLKS) the chain is on the cytoplasmic side. A helical transmembrane segment spans residues 192-212 (LEYCVFVLIIYELVLRLRRTL). The Extracellular segment spans residues 213–259 (SQLQEEFQDCEQQDMLQALCVALKRNQLLLGRIWRLEGDVGSYFTPT). The chain crosses the membrane as a helical span at residues 260–280 (MLLLFLYNGLTILHMVNWAYI). Over 281-365 (NKFLYDSCCQ…LRFTCGGLFD (85 aa)) the chain is Cytoplasmic. A helical membrane pass occupies residues 366–386 (INLKYFGGLLVTIFGYIIILI). The Extracellular segment spans residues 387 to 403 (QFKVQAIAANRYKKVVN).

Belongs to the insect chemoreceptor superfamily. Gustatory receptor (GR) family. Gr2a subfamily.

It localises to the cell membrane. Probable gustatory receptor which mediates acceptance or avoidance behavior, depending on its substrates. In Drosophila melanogaster (Fruit fly), this protein is Putative gustatory receptor 98b (Gr98b).